Reading from the N-terminus, the 466-residue chain is Asparagine--tRNA ligase (466 aa).

It belongs to the class-II aminoacyl-tRNA synthetase family. As to quaternary structure, homodimer.

It localises to the cytoplasm. It catalyses the reaction tRNA(Asn) + L-asparagine + ATP = L-asparaginyl-tRNA(Asn) + AMP + diphosphate + H(+). In Psychromonas ingrahamii (strain DSM 17664 / CCUG 51855 / 37), this protein is Asparagine--tRNA ligase.